Consider the following 601-residue polypeptide: NADH-ubiquinone oxidoreductase chain 5 (601 aa).

A run of 15 helical transmembrane segments spans residues 3–23, 36–56, 84–104, 114–134, 140–160, 171–191, 201–221, 240–260, 272–292, 324–346, 365–385, 404–426, 456–476, 483–503, and 581–601; these read LIMP…MMSY, VTSS…MFLL, FFSI…MEFS, INQF…LVTA, LFIG…WWYG, AILY…WLLL, IFML…AAAG, TPVS…FLLV, ILTM…ICAL, AFLH…GSII, MPFT…MPFL, NAWA…TRLI, LALG…PLIT, LYMK…AMGL, and LIKL…MLII.

It belongs to the complex I subunit 5 family.

It localises to the mitochondrion inner membrane. The catalysed reaction is a ubiquinone + NADH + 5 H(+)(in) = a ubiquinol + NAD(+) + 4 H(+)(out). Functionally, core subunit of the mitochondrial membrane respiratory chain NADH dehydrogenase (Complex I) that is believed to belong to the minimal assembly required for catalysis. Complex I functions in the transfer of electrons from NADH to the respiratory chain. The immediate electron acceptor for the enzyme is believed to be ubiquinone. This is NADH-ubiquinone oxidoreductase chain 5 (MT-ND5) from Dasypus novemcinctus (Nine-banded armadillo).